The following is a 115-amino-acid chain: Non-specific lipid-transfer protein (115 aa).

An N-terminal signal peptide occupies residues 1 to 24 (MASSAVTKLALVVALCMAVSVAHA). 4 cysteine pairs are disulfide-bonded: Cys-27–Cys-74, Cys-37–Cys-51, Cys-52–Cys-97, and Cys-72–Cys-111.

Belongs to the plant LTP family.

Plant non-specific lipid-transfer proteins transfer phospholipids as well as galactolipids across membranes. May play a role in wax or cutin deposition in the cell walls of expanding epidermal cells and certain secretory tissues. The sequence is that of Non-specific lipid-transfer protein (MALD3) from Malus domestica (Apple).